The chain runs to 503 residues: Transcriptional regulator LovE (503 aa).

Residues 1 to 14 show a composition bias toward polar residues; that stretch reads MAADQGTFTTSVTL. The segment at 1–21 is disordered; it reads MAADQGTFTTSVTLSPVEGSR. The segment at residues 35 to 67 is a DNA-binding region (zn(2)-C6 fungal-type); sequence CDRCHAQKIKCTGNKEVTARAPCQRCQQAGLRC. 2 disordered regions span residues 89–124 and 331–362; these read ADPDPCLHMSSPPVPSQSLPLDVSESHSSNTSRQFL and SHMNPWEGSRSESPSRDDTSSTSGHSSVDTIP. Basic and acidic residues predominate over residues 339–349; the sequence is SRSESPSRDDT. Positions 350-359 are enriched in polar residues; the sequence is SSTSGHSSVD.

The protein resides in the nucleus. Its function is as follows. Transcription factor that regulates the expression of the he gene cluster that mediates the biosynthesis of lovastatin (also known as mevinolin, mevacor or monacolin K), a hypolipidemic inhibitor of (3S)-hydroxymethylglutaryl-coenzyme A (HMG-CoA) reductase (HMGR). The protein is Transcriptional regulator LovE of Aspergillus terreus (strain NIH 2624 / FGSC A1156).